The primary structure comprises 342 residues: S-adenosylmethionine:tRNA ribosyltransferase-isomerase (342 aa).

The protein belongs to the QueA family. As to quaternary structure, monomer.

It is found in the cytoplasm. The enzyme catalyses 7-aminomethyl-7-carbaguanosine(34) in tRNA + S-adenosyl-L-methionine = epoxyqueuosine(34) in tRNA + adenine + L-methionine + 2 H(+). It functions in the pathway tRNA modification; tRNA-queuosine biosynthesis. Transfers and isomerizes the ribose moiety from AdoMet to the 7-aminomethyl group of 7-deazaguanine (preQ1-tRNA) to give epoxyqueuosine (oQ-tRNA). The polypeptide is S-adenosylmethionine:tRNA ribosyltransferase-isomerase (Streptococcus pyogenes serotype M2 (strain MGAS10270)).